Here is an 82-residue protein sequence, read N- to C-terminus: Small ribosomal subunit protein bS16 (82 aa).

It belongs to the bacterial ribosomal protein bS16 family.

This is Small ribosomal subunit protein bS16 from Edwardsiella ictaluri (strain 93-146).